Here is a 251-residue protein sequence, read N- to C-terminus: 3-deoxy-manno-octulosonate cytidylyltransferase (251 aa).

Belongs to the KdsB family.

Its subcellular location is the cytoplasm. The enzyme catalyses 3-deoxy-alpha-D-manno-oct-2-ulosonate + CTP = CMP-3-deoxy-beta-D-manno-octulosonate + diphosphate. It participates in nucleotide-sugar biosynthesis; CMP-3-deoxy-D-manno-octulosonate biosynthesis; CMP-3-deoxy-D-manno-octulosonate from 3-deoxy-D-manno-octulosonate and CTP: step 1/1. It functions in the pathway bacterial outer membrane biogenesis; lipopolysaccharide biosynthesis. Activates KDO (a required 8-carbon sugar) for incorporation into bacterial lipopolysaccharide in Gram-negative bacteria. This chain is 3-deoxy-manno-octulosonate cytidylyltransferase, found in Vibrio vulnificus (strain YJ016).